Reading from the N-terminus, the 75-residue chain is Small ribosomal subunit protein bS18c (75 aa).

It belongs to the bacterial ribosomal protein bS18 family. As to quaternary structure, part of the 30S ribosomal subunit.

The protein localises to the plastid. It is found in the chloroplast. This chain is Small ribosomal subunit protein bS18c, found in Angiopteris evecta (Mule's foot fern).